We begin with the raw amino-acid sequence, 396 residues long: Ornithine aminotransferase (396 aa).

Lysine 255 is modified (N6-(pyridoxal phosphate)lysine).

This sequence belongs to the class-III pyridoxal-phosphate-dependent aminotransferase family. OAT subfamily. Pyridoxal 5'-phosphate serves as cofactor.

The protein resides in the cytoplasm. It catalyses the reaction a 2-oxocarboxylate + L-ornithine = L-glutamate 5-semialdehyde + an L-alpha-amino acid. Its pathway is amino-acid biosynthesis; L-proline biosynthesis; L-glutamate 5-semialdehyde from L-ornithine: step 1/1. Its function is as follows. Catalyzes the interconversion of ornithine to glutamate semialdehyde. The polypeptide is Ornithine aminotransferase (Bacillus cereus (strain Q1)).